The following is a 359-amino-acid chain: GTP 3',8-cyclase 1 (359 aa).

The 221-residue stretch at 21–241 (RCRRMMGDLR…SLEKRYGRIE (221 aa)) folds into the Radical SAM core domain. Position 30 (arginine 30) interacts with GTP. Positions 37 and 41 each coordinate [4Fe-4S] cluster. Residue tyrosine 43 participates in S-adenosyl-L-methionine binding. A [4Fe-4S] cluster-binding site is contributed by cysteine 44. Arginine 80 is a GTP binding site. An S-adenosyl-L-methionine-binding site is contributed by glycine 84. GTP is bound at residue threonine 115. Serine 139 is an S-adenosyl-L-methionine binding site. Lysine 176 is a binding site for GTP. Methionine 210 serves as a coordination point for S-adenosyl-L-methionine. The [4Fe-4S] cluster site is built by cysteine 273 and cysteine 276. A GTP-binding site is contributed by 278–280 (RSR). Cysteine 290 is a [4Fe-4S] cluster binding site.

It belongs to the radical SAM superfamily. MoaA family. Monomer and homodimer. Requires [4Fe-4S] cluster as cofactor.

The catalysed reaction is GTP + AH2 + S-adenosyl-L-methionine = (8S)-3',8-cyclo-7,8-dihydroguanosine 5'-triphosphate + 5'-deoxyadenosine + L-methionine + A + H(+). The protein operates within cofactor biosynthesis; molybdopterin biosynthesis. In terms of biological role, catalyzes the cyclization of GTP to (8S)-3',8-cyclo-7,8-dihydroguanosine 5'-triphosphate. The polypeptide is GTP 3',8-cyclase 1 (Mycobacterium tuberculosis (strain CDC 1551 / Oshkosh)).